The sequence spans 189 residues: Small ribosomal subunit protein uS5 (189 aa).

Residues 27–90 form the S5 DRBM domain; that stretch reads FEERLLEAAR…EDAKKKTIRV (64 aa).

The protein belongs to the universal ribosomal protein uS5 family. As to quaternary structure, part of the 30S ribosomal subunit. Contacts proteins S4 and S8.

Functionally, with S4 and S12 plays an important role in translational accuracy. In terms of biological role, located at the back of the 30S subunit body where it stabilizes the conformation of the head with respect to the body. In Hydrogenobaculum sp. (strain Y04AAS1), this protein is Small ribosomal subunit protein uS5.